The chain runs to 35 residues: Photosystem II reaction center protein T (35 aa).

The chain crosses the membrane as a helical span at residues 3-23 (ALVYTFLLVSTLGIIFFAIFF).

Belongs to the PsbT family. As to quaternary structure, PSII is composed of 1 copy each of membrane proteins PsbA, PsbB, PsbC, PsbD, PsbE, PsbF, PsbH, PsbI, PsbJ, PsbK, PsbL, PsbM, PsbT, PsbY, PsbZ, Psb30/Ycf12, at least 3 peripheral proteins of the oxygen-evolving complex and a large number of cofactors. It forms dimeric complexes.

The protein localises to the plastid. It is found in the chloroplast thylakoid membrane. Found at the monomer-monomer interface of the photosystem II (PS II) dimer, plays a role in assembly and dimerization of PSII. PSII is a light-driven water plastoquinone oxidoreductase, using light energy to abstract electrons from H(2)O, generating a proton gradient subsequently used for ATP formation. The polypeptide is Photosystem II reaction center protein T (Schisandra chinensis (Chinese magnolia vine)).